Here is a 192-residue protein sequence, read N- to C-terminus: Putative metal-sulfur cluster biosynthesis proteins YuaD (192 aa).

The MOSC domain occupies 15–179 (ADTKSFVTKQ…VYTGDEIEVH (165 aa)).

This Bacillus subtilis (strain 168) protein is Putative metal-sulfur cluster biosynthesis proteins YuaD (yuaD).